A 442-amino-acid polypeptide reads, in one-letter code: NAD kinase 2, mitochondrial (442 aa).

Residues 1–62 constitute a mitochondrion transit peptide; it reads MTCYRGFLLG…RELAGCGSRA (62 aa). The span at 24–36 shows a compositional bias: low complexity; the sequence is RGPGAGGPAARPR. A disordered region spans residues 24–60; the sequence is RGPGAGGPAARPRLGGDGGGRRHLGQGQPRELAGCGS. An N6-acetyllysine; alternate modification is found at lysine 76. The residue at position 76 (lysine 76) is an N6-succinyllysine; alternate. The residue at position 188 (serine 188) is a Phosphoserine. Lysine 302 bears the N6-succinyllysine mark. The residue at position 317 (lysine 317) is an N6-acetyllysine; alternate. Residue lysine 317 is modified to N6-succinyllysine; alternate. Serine 367 bears the Phosphoserine mark. At lysine 397 the chain carries N6-acetyllysine.

This sequence belongs to the NAD kinase family. Homodimer. In terms of tissue distribution, widely expressed.

It is found in the mitochondrion. The catalysed reaction is NAD(+) + ATP = ADP + NADP(+) + H(+). With respect to regulation, inhibited by NADH, NADPH and NADP(+). Functionally, mitochondrial NAD(+) kinase that phosphorylates NAD(+) to yield NADP(+). Can use both ATP or inorganic polyphosphate as the phosphoryl donor. Also has weak NADH kinase activity in vitro; however NADH kinase activity is much weaker than the NAD(+) kinase activity and may not be relevant in vivo. This Homo sapiens (Human) protein is NAD kinase 2, mitochondrial (NADK2).